A 91-amino-acid polypeptide reads, in one-letter code: YcgL domain-containing protein Ent638_2370 (91 aa).

One can recognise a YcgL domain in the interval 1–85 (MFCVIYRSAK…PPENLLKQHL (85 aa)).

The protein is YcgL domain-containing protein Ent638_2370 of Enterobacter sp. (strain 638).